The primary structure comprises 267 residues: Ribosomal RNA small subunit methyltransferase A (267 aa).

6 residues coordinate S-adenosyl-L-methionine: Asn-18, Leu-20, Gly-45, Glu-66, Asp-91, and Asn-112.

Belongs to the class I-like SAM-binding methyltransferase superfamily. rRNA adenine N(6)-methyltransferase family. RsmA subfamily.

Its subcellular location is the cytoplasm. It carries out the reaction adenosine(1518)/adenosine(1519) in 16S rRNA + 4 S-adenosyl-L-methionine = N(6)-dimethyladenosine(1518)/N(6)-dimethyladenosine(1519) in 16S rRNA + 4 S-adenosyl-L-homocysteine + 4 H(+). In terms of biological role, specifically dimethylates two adjacent adenosines (A1518 and A1519) in the loop of a conserved hairpin near the 3'-end of 16S rRNA in the 30S particle. May play a critical role in biogenesis of 30S subunits. This chain is Ribosomal RNA small subunit methyltransferase A, found in Shewanella woodyi (strain ATCC 51908 / MS32).